The chain runs to 157 residues: Peptide methionine sulfoxide reductase MsrA (157 aa).

The active site involves C10.

Belongs to the MsrA Met sulfoxide reductase family.

It catalyses the reaction L-methionyl-[protein] + [thioredoxin]-disulfide + H2O = L-methionyl-(S)-S-oxide-[protein] + [thioredoxin]-dithiol. The enzyme catalyses [thioredoxin]-disulfide + L-methionine + H2O = L-methionine (S)-S-oxide + [thioredoxin]-dithiol. In terms of biological role, has an important function as a repair enzyme for proteins that have been inactivated by oxidation. Catalyzes the reversible oxidation-reduction of methionine sulfoxide in proteins to methionine. The sequence is that of Peptide methionine sulfoxide reductase MsrA from Clostridium botulinum (strain Loch Maree / Type A3).